The sequence spans 658 residues: UvrABC system protein B (658 aa).

The Helicase ATP-binding domain maps to 25 to 178 (KSLKNKNHYQ…KSFLLKLVEM (154 aa)). 38–45 (GVTGSGKT) is an ATP binding site. The Beta-hairpin signature appears at 91-114 (HFDYYQPESYIPRRDLFIEKDSSI). The Helicase C-terminal domain occupies 433-607 (QVQDLFDEIK…ELKLRDDETK (175 aa)). A UVR domain is found at 623–658 (EKIIKELDKKMRECAKNLDFEEAMHLRDEIAKLRTL).

Belongs to the UvrB family. Forms a heterotetramer with UvrA during the search for lesions. Interacts with UvrC in an incision complex.

Its subcellular location is the cytoplasm. Functionally, the UvrABC repair system catalyzes the recognition and processing of DNA lesions. A damage recognition complex composed of 2 UvrA and 2 UvrB subunits scans DNA for abnormalities. Upon binding of the UvrA(2)B(2) complex to a putative damaged site, the DNA wraps around one UvrB monomer. DNA wrap is dependent on ATP binding by UvrB and probably causes local melting of the DNA helix, facilitating insertion of UvrB beta-hairpin between the DNA strands. Then UvrB probes one DNA strand for the presence of a lesion. If a lesion is found the UvrA subunits dissociate and the UvrB-DNA preincision complex is formed. This complex is subsequently bound by UvrC and the second UvrB is released. If no lesion is found, the DNA wraps around the other UvrB subunit that will check the other stand for damage. The sequence is that of UvrABC system protein B from Helicobacter acinonychis (strain Sheeba).